The sequence spans 37 residues: Beta-2-microglobulin (37 aa).

The Ig-like C1-type domain occupies 11 to 37 (GKEDVLICHVSNFHPPDITITLLKNGE).

This sequence belongs to the beta-2-microglobulin family. As to quaternary structure, heterodimer of an alpha chain and a beta chain. Beta-2-microglobulin is the beta-chain of major histocompatibility complex class I molecules.

It is found in the secreted. Functionally, component of the class I major histocompatibility complex (MHC). Involved in the presentation of peptide antigens to the immune system. This is Beta-2-microglobulin (b2m) from Oreochromis niloticus (Nile tilapia).